The sequence spans 108 residues: Mitochondrial import inner membrane translocase subunit tim-13 (108 aa).

The Twin CX3C motif signature appears at 45 to 68; that stretch reads CTNKCITAPGSSLASGEKQCLQRC. 2 disulfide bridges follow: cysteine 45–cysteine 68 and cysteine 49–cysteine 64. Residues 89–108 are disordered; sequence EEMASSGGMGGGFGQGPSFS. The span at 95–108 shows a compositional bias: gly residues; it reads GGMGGGFGQGPSFS.

The protein belongs to the small Tim family. As to quaternary structure, heterohexamer; composed of 3 copies of tim-8/ddp-1 and 3 copies of tin-13/tim-13, named soluble 70 kDa complex. Associates with the TIM22 complex, whose core is composed of tim-22.

Its subcellular location is the mitochondrion inner membrane. Functionally, mitochondrial intermembrane chaperone that participates in the import and insertion of some multi-pass transmembrane proteins into the mitochondrial inner membrane. Also required for the transfer of beta-barrel precursors from the TOM complex to the sorting and assembly machinery (SAM complex) of the outer membrane. Acts as a chaperone-like protein that protects the hydrophobic precursors from aggregation and guide them through the mitochondrial intermembrane space. The tim-8-tim-13 complex mediates the import of some proteins while the predominant tim-9/tin-9.1-tim-10/tin-10 70 kDa complex mediates the import of much more proteins. This Caenorhabditis elegans protein is Mitochondrial import inner membrane translocase subunit tim-13 (tin-13).